Here is a 454-residue protein sequence, read N- to C-terminus: Bifunctional protein GlmU (454 aa).

Positions methionine 1–arginine 226 are pyrophosphorylase. UDP-N-acetyl-alpha-D-glucosamine is bound by residues leucine 8 to glycine 11, lysine 22, glutamine 73, glycine 78 to threonine 79, tyrosine 100 to aspartate 102, glycine 137, glutamate 151, asparagine 166, and asparagine 224. Residue aspartate 102 coordinates Mg(2+). Asparagine 224 lines the Mg(2+) pocket. Positions valine 227–glutamate 247 are linker. The segment at glycine 248–lysine 454 is N-acetyltransferase. Residues arginine 330 and lysine 348 each coordinate UDP-N-acetyl-alpha-D-glucosamine. The active-site Proton acceptor is histidine 360. 2 residues coordinate UDP-N-acetyl-alpha-D-glucosamine: tyrosine 363 and asparagine 374. Acetyl-CoA contacts are provided by residues alanine 377, asparagine 383–tyrosine 384, serine 402, alanine 420, and arginine 437.

This sequence in the N-terminal section; belongs to the N-acetylglucosamine-1-phosphate uridyltransferase family. It in the C-terminal section; belongs to the transferase hexapeptide repeat family. In terms of assembly, homotrimer. It depends on Mg(2+) as a cofactor.

The protein localises to the cytoplasm. It catalyses the reaction alpha-D-glucosamine 1-phosphate + acetyl-CoA = N-acetyl-alpha-D-glucosamine 1-phosphate + CoA + H(+). The catalysed reaction is N-acetyl-alpha-D-glucosamine 1-phosphate + UTP + H(+) = UDP-N-acetyl-alpha-D-glucosamine + diphosphate. The protein operates within nucleotide-sugar biosynthesis; UDP-N-acetyl-alpha-D-glucosamine biosynthesis; N-acetyl-alpha-D-glucosamine 1-phosphate from alpha-D-glucosamine 6-phosphate (route II): step 2/2. It functions in the pathway nucleotide-sugar biosynthesis; UDP-N-acetyl-alpha-D-glucosamine biosynthesis; UDP-N-acetyl-alpha-D-glucosamine from N-acetyl-alpha-D-glucosamine 1-phosphate: step 1/1. Its pathway is bacterial outer membrane biogenesis; LPS lipid A biosynthesis. Its function is as follows. Catalyzes the last two sequential reactions in the de novo biosynthetic pathway for UDP-N-acetylglucosamine (UDP-GlcNAc). The C-terminal domain catalyzes the transfer of acetyl group from acetyl coenzyme A to glucosamine-1-phosphate (GlcN-1-P) to produce N-acetylglucosamine-1-phosphate (GlcNAc-1-P), which is converted into UDP-GlcNAc by the transfer of uridine 5-monophosphate (from uridine 5-triphosphate), a reaction catalyzed by the N-terminal domain. The sequence is that of Bifunctional protein GlmU from Shewanella piezotolerans (strain WP3 / JCM 13877).